Here is a 259-residue protein sequence, read N- to C-terminus: MMQKQNMIVVNQKEIAKNIYELVLQGTLVQQMNEPGQFVHIKVAEGIAPLLRRPISICNVDQEKNEFTMLYRAEGQGTKTLATRKQGEMIDVLGPLGHGFPVEEAEAGQTALLVGGGIGVPPLYELSQRLVAKGVRVIHILGFQTKDVVFYEEKFAELGDTYVATVDGTHGTKGFVTDVIDNYGIDFDILYSCGPLAMLRALEGRYKEKKAYISLEERMGCGIGACFACVCHLQEDPSGHSYKKVCSDGPVFPIGEVVL.

An FAD-binding FR-type domain is found at 2-102 (MQKQNMIVVN…LGPLGHGFPV (101 aa)). Residues 53 to 56 (RPIS), 70 to 72 (LYR), and 77 to 78 (GT) each bind FAD. The [2Fe-2S] cluster site is built by C221, C226, C229, and C246.

Belongs to the PyrK family. In terms of assembly, heterotetramer of 2 PyrK and 2 PyrD type B subunits. [2Fe-2S] cluster is required as a cofactor. FAD serves as cofactor.

The protein operates within pyrimidine metabolism; UMP biosynthesis via de novo pathway; orotate from (S)-dihydroorotate (NAD(+) route): step 1/1. Functionally, responsible for channeling the electrons from the oxidation of dihydroorotate from the FMN redox center in the PyrD type B subunit to the ultimate electron acceptor NAD(+). The polypeptide is Dihydroorotate dehydrogenase B (NAD(+)), electron transfer subunit (Bacillus cereus (strain G9842)).